Consider the following 340-residue polypeptide: Anthranilate phosphoribosyltransferase (340 aa).

Residues G82, G85 to D86, T90, N92 to T95, K110 to S118, and S122 contribute to the 5-phospho-alpha-D-ribose 1-diphosphate site. G82 is a binding site for anthranilate. Residue S94 coordinates Mg(2+). R168 is an anthranilate binding site. Residues D227 and E228 each contribute to the Mg(2+) site.

It belongs to the anthranilate phosphoribosyltransferase family. Homodimer. The cofactor is Mg(2+).

It carries out the reaction N-(5-phospho-beta-D-ribosyl)anthranilate + diphosphate = 5-phospho-alpha-D-ribose 1-diphosphate + anthranilate. The protein operates within amino-acid biosynthesis; L-tryptophan biosynthesis; L-tryptophan from chorismate: step 2/5. Functionally, catalyzes the transfer of the phosphoribosyl group of 5-phosphorylribose-1-pyrophosphate (PRPP) to anthranilate to yield N-(5'-phosphoribosyl)-anthranilate (PRA). In Hydrogenovibrio crunogenus (strain DSM 25203 / XCL-2) (Thiomicrospira crunogena), this protein is Anthranilate phosphoribosyltransferase.